A 237-amino-acid polypeptide reads, in one-letter code: Orotidine 5'-phosphate decarboxylase (237 aa).

Residues Asp10, Lys32, 59–68, Thr118, Arg180, Gln189, Gly209, and Arg210 contribute to the substrate site; that span reads DLKLHDIPNT. The active-site Proton donor is the Lys61.

Belongs to the OMP decarboxylase family. Type 1 subfamily. As to quaternary structure, homodimer.

It carries out the reaction orotidine 5'-phosphate + H(+) = UMP + CO2. It participates in pyrimidine metabolism; UMP biosynthesis via de novo pathway; UMP from orotate: step 2/2. In terms of biological role, catalyzes the decarboxylation of orotidine 5'-monophosphate (OMP) to uridine 5'-monophosphate (UMP). The chain is Orotidine 5'-phosphate decarboxylase from Fusobacterium nucleatum subsp. nucleatum (strain ATCC 25586 / DSM 15643 / BCRC 10681 / CIP 101130 / JCM 8532 / KCTC 2640 / LMG 13131 / VPI 4355).